The sequence spans 242 residues: UDP-2,3-diacylglucosamine hydrolase (242 aa).

Mn(2+)-binding residues include Asp9, His11, Asp42, Asn79, and His114. A substrate-binding site is contributed by 79–80 (NR). The substrate site is built by Asp122, Ser160, Asn164, Lys167, and His195. Mn(2+) is bound by residues His195 and His197.

The protein belongs to the LpxH family. Mn(2+) serves as cofactor.

Its subcellular location is the cell inner membrane. The catalysed reaction is UDP-2-N,3-O-bis[(3R)-3-hydroxytetradecanoyl]-alpha-D-glucosamine + H2O = 2-N,3-O-bis[(3R)-3-hydroxytetradecanoyl]-alpha-D-glucosaminyl 1-phosphate + UMP + 2 H(+). The protein operates within glycolipid biosynthesis; lipid IV(A) biosynthesis; lipid IV(A) from (3R)-3-hydroxytetradecanoyl-[acyl-carrier-protein] and UDP-N-acetyl-alpha-D-glucosamine: step 4/6. In terms of biological role, hydrolyzes the pyrophosphate bond of UDP-2,3-diacylglucosamine to yield 2,3-diacylglucosamine 1-phosphate (lipid X) and UMP by catalyzing the attack of water at the alpha-P atom. Involved in the biosynthesis of lipid A, a phosphorylated glycolipid that anchors the lipopolysaccharide to the outer membrane of the cell. The polypeptide is UDP-2,3-diacylglucosamine hydrolase (Shewanella loihica (strain ATCC BAA-1088 / PV-4)).